The primary structure comprises 266 residues: 15-hydroxyprostaglandin dehydrogenase [NAD(+)] (266 aa).

NAD(+) is bound by residues 12 to 20 (GAAQGIGRA), 36 to 37 (DW), 63 to 65 (CDV), and N91. Positions 138 and 148 each coordinate substrate. Y151 serves as the catalytic Proton acceptor. Residues 151–155 (YCASK) and 186–188 (VNT) each bind NAD(+).

It belongs to the short-chain dehydrogenases/reductases (SDR) family. In terms of assembly, homodimer.

The protein resides in the cytoplasm. It catalyses the reaction prostaglandin E2 + NAD(+) = 15-oxoprostaglandin E2 + NADH + H(+). The enzyme catalyses (15S)-hydroxy-(5Z,8Z,11Z,13E)-eicosatetraenoate + NAD(+) = 15-oxo-(5Z,8Z,11Z,13E)-eicosatetraenoate + NADH + H(+). It carries out the reaction (11R)-hydroxy-(5Z,8Z,12E,14Z)-eicosatetraenoate + NAD(+) = 11-oxo-(5Z,8Z,12E,14Z)-eicosatetraenoate + NADH + H(+). The catalysed reaction is lipoxin A4 + NAD(+) = 15-oxo-(5S,6R)-dihydroxy-(7E,9E,11Z,13E)-eicosatetraenoate + NADH + H(+). It catalyses the reaction 15-oxo-(5S,6R)-dihydroxy-(7E,9E,11Z)-eicosatrienoate + NADH + H(+) = (5S,6R,15S)-trihydroxy-(7E,9E,11Z)-eicosatrienoate + NAD(+). The enzyme catalyses prostaglandin A1 + NAD(+) = 15-oxo-prostaglandin A1 + NADH + H(+). It carries out the reaction prostaglandin E1 + NAD(+) = 15-oxoprostaglandin E1 + NADH + H(+). The catalysed reaction is 14-hydroxy-(4Z,7Z,10Z,12E,16Z,19Z)-docosahexaenoate + NAD(+) = 14-oxo-(4Z,7Z,10Z,12E,16Z,19Z)-docosahexaenoate + NADH + H(+). It catalyses the reaction resolvin E1 + NAD(+) = 18-oxo-resolvin E1 + NADH + H(+). The enzyme catalyses resolvin D1 + NAD(+) = 8-oxoresolvin D1 + NADH + H(+). It carries out the reaction resolvin D1 + NAD(+) = 17-oxoresolvin D1 + NADH + H(+). The catalysed reaction is resolvin D2 + NAD(+) = 7-oxoresolvin D2 + NADH + H(+). It catalyses the reaction resolvin D2 + NAD(+) = 16-oxoresolvin D2 + NADH + H(+). Its function is as follows. Catalyzes the NAD-dependent dehydrogenation (oxidation) of a broad array of hydroxylated polyunsaturated fatty acids (mainly eicosanoids and docosanoids, including prostaglandins, lipoxins and resolvins), yielding their corresponding keto (oxo) metabolites. Decreases the levels of the pro-proliferative prostaglandins such as prostaglandin E2 (whose activity is increased in cancer because of an increase in the expression of cyclooxygenase 2) and generates oxo-fatty acid products that can profoundly influence cell function by abrogating pro-inflammatory cytokine expression. Converts resolvins E1, D1 and D2 to their oxo products, which represents a mode of resolvin inactivation. Resolvin E1 plays important roles during the resolution phase of acute inflammation, while resolvins D1 and D2 have a unique role in obesity-induced adipose inflammation. The chain is 15-hydroxyprostaglandin dehydrogenase [NAD(+)] (HPGD) from Macaca fascicularis (Crab-eating macaque).